Consider the following 408-residue polypeptide: Probable fructose-2,6-bisphosphatase C732.02c (408 aa).

ATP is bound at residue 16-24; sequence GLPASGKTS. Residue Asp-88 is part of the active site. 127-132 is a binding site for ATP; that stretch reads NITDMC. Tyr-157 serves as a coordination point for beta-D-fructose 6-phosphate. A beta-D-fructose 2,6-bisphosphate-binding site is contributed by Arg-213. His-214 acts as the Tele-phosphohistidine intermediate in catalysis. Positions 220 and 226 each coordinate beta-D-fructose 2,6-bisphosphate. The Proton donor/acceptor role is filled by Glu-285. Beta-D-fructose 2,6-bisphosphate contacts are provided by Tyr-296, Arg-310, Lys-314, Tyr-325, Gln-351, and Arg-355. An ATP-binding site is contributed by 307 to 310; it reads AELR. ATP-binding positions include 351–355 and Tyr-387; that span reads QAILR.

It in the C-terminal section; belongs to the phosphoglycerate mutase family.

The catalysed reaction is beta-D-fructose 2,6-bisphosphate + H2O = beta-D-fructose 6-phosphate + phosphate. Functionally, this is predominantly if not solely a fructose-2,6-bisphosphatase. The protein is Probable fructose-2,6-bisphosphatase C732.02c of Schizosaccharomyces pombe (strain 972 / ATCC 24843) (Fission yeast).